A 607-amino-acid polypeptide reads, in one-letter code: Elongation factor 4 (607 aa).

Positions 11–193 (GKIRNFSIIA…QIVEKVPAPT (183 aa)) constitute a tr-type G domain. GTP-binding positions include 23–28 (DHGKST) and 140–143 (NKID).

It belongs to the TRAFAC class translation factor GTPase superfamily. Classic translation factor GTPase family. LepA subfamily.

It is found in the cell membrane. The enzyme catalyses GTP + H2O = GDP + phosphate + H(+). In terms of biological role, required for accurate and efficient protein synthesis under certain stress conditions. May act as a fidelity factor of the translation reaction, by catalyzing a one-codon backward translocation of tRNAs on improperly translocated ribosomes. Back-translocation proceeds from a post-translocation (POST) complex to a pre-translocation (PRE) complex, thus giving elongation factor G a second chance to translocate the tRNAs correctly. Binds to ribosomes in a GTP-dependent manner. This Streptococcus pneumoniae (strain Taiwan19F-14) protein is Elongation factor 4.